The chain runs to 148 residues: Aspartate 1-decarboxylase (148 aa).

Ser-25 functions as the Schiff-base intermediate with substrate; via pyruvic acid in the catalytic mechanism. Ser-25 carries the post-translational modification Pyruvic acid (Ser). Residue Thr-57 participates in substrate binding. The active-site Proton donor is Tyr-58. 73–75 (GAA) is a substrate binding site.

It belongs to the PanD family. As to quaternary structure, heterooctamer of four alpha and four beta subunits. Pyruvate serves as cofactor. In terms of processing, is synthesized initially as an inactive proenzyme, which is activated by self-cleavage at a specific serine bond to produce a beta-subunit with a hydroxyl group at its C-terminus and an alpha-subunit with a pyruvoyl group at its N-terminus.

It is found in the cytoplasm. The enzyme catalyses L-aspartate + H(+) = beta-alanine + CO2. It functions in the pathway cofactor biosynthesis; (R)-pantothenate biosynthesis; beta-alanine from L-aspartate: step 1/1. Functionally, catalyzes the pyruvoyl-dependent decarboxylation of aspartate to produce beta-alanine. This is Aspartate 1-decarboxylase from Rhodococcus opacus (strain B4).